Consider the following 53-residue polypeptide: uncharacterized protein (53 aa).

The protein belongs to the ycf15 family.

The protein localises to the plastid. The protein resides in the chloroplast. This is an uncharacterized protein from Helianthus annuus (Common sunflower).